The sequence spans 287 residues: Casein kinase II subunit beta-1 (287 aa).

The segment at 1–97 (MYRDRGTVNS…ESDVSGSDGE (97 aa)) is disordered. The span at 13–25 (EVVDRKRINDALE) shows a compositional bias: basic and acidic residues. Residues 41-50 (GTVTAATTTA) show a composition bias toward low complexity. Over residues 78 to 97 (SDDESDTDSEESDVSGSDGE) the composition is skewed to acidic residues.

This sequence belongs to the casein kinase 2 subunit beta family. In terms of assembly, heterotetramer of two catalytic alpha subunits and two regulatory beta subunits. Interacts with CCA1. Interacts with LHY. In terms of processing, phosphorylated by alpha subunit.

Its subcellular location is the cytoplasm. It localises to the cytosol. It is found in the nucleus. Plays a complex role in regulating the basal catalytic activity of the alpha subunit. The tetrameric holoenzyme CK2, composed of two alpha and two beta subunits, phosphorylates the transcription factor GBFl, resulting in stimulation of its DNA binding activity. CK2 phosphorylates the transcription factor PIF1 after an exposure to light, resulting in a proteasome-dependent degradation of PIF1 and promotion of photomorphogenesis. CK2 phosphorylates translation initiation factors. May participate in the regulation of the initiation of translation. Stimulates the binding of CCA1 to promoters. This chain is Casein kinase II subunit beta-1 (CKB1), found in Arabidopsis thaliana (Mouse-ear cress).